Here is a 166-residue protein sequence, read N- to C-terminus: 3-hydroxyacyl-[acyl-carrier-protein] dehydratase FabZ (166 aa).

The active site involves H72.

The protein belongs to the thioester dehydratase family. FabZ subfamily.

The protein localises to the cytoplasm. The catalysed reaction is a (3R)-hydroxyacyl-[ACP] = a (2E)-enoyl-[ACP] + H2O. Functionally, involved in unsaturated fatty acids biosynthesis. Catalyzes the dehydration of short chain beta-hydroxyacyl-ACPs and long chain saturated and unsaturated beta-hydroxyacyl-ACPs. This Synechococcus sp. (strain JA-2-3B'a(2-13)) (Cyanobacteria bacterium Yellowstone B-Prime) protein is 3-hydroxyacyl-[acyl-carrier-protein] dehydratase FabZ.